The primary structure comprises 27 residues: Cupiennin-4a (27 aa).

At Glu27 the chain carries Glutamic acid 1-amide.

Expressed by the venom gland.

It localises to the secreted. The chain is Cupiennin-4a from Cupiennius salei (American wandering spider).